The sequence spans 417 residues: Cobalamin binding intrinsic factor (417 aa).

The first 18 residues, 1-18 (MAWFALYLLSLLWATAGT), serve as a signal peptide directing secretion. Intrachain disulfides connect cysteine 26–cysteine 246, cysteine 103–cysteine 288, and cysteine 143–cysteine 182. Residue aspartate 171 coordinates cob(II)alamin. The residue at position 191 (serine 191) is a Phosphoserine. Aspartate 222 and glutamine 270 together coordinate cob(II)alamin. N-linked (GlcNAc...) asparagine glycosylation is found at asparagine 311, asparagine 330, and asparagine 334. Cob(II)alamin-binding positions include 365–370 (SWGLVV) and 386–395 (WQFLSGVTPL). Asparagine 413 is a glycosylation site (N-linked (GlcNAc...) asparagine).

Belongs to the eukaryotic cobalamin transport proteins family. Interacts with CUBN (via CUB domains). Gastric mucosa.

Its subcellular location is the secreted. Functionally, promotes absorption of the essential vitamin cobalamin (Cbl) in the ileum. After interaction with CUBN, the CBLIF-cobalamin complex is internalized via receptor-mediated endocytosis. This is Cobalamin binding intrinsic factor from Homo sapiens (Human).